A 581-amino-acid polypeptide reads, in one-letter code: Pentatricopeptide repeat-containing protein At3g56550 (581 aa).

PPR repeat units lie at residues 70–104, 106–140, 141–171, 172–206, 207–241, 242–272, 273–307, 308–338, and 344–378; these read STSD…SVSR, DLFT…GFLD, DAIV…MPVR, DLVS…GVCG, DSYT…RCES, CVFV…MRKR, DVLT…GVRP, NAIT…MSSQ, and NVKH…EDPV. Residues 379-454 form a type E motif region; it reads LWRTLLGSCK…VPGWSWIEIG (76 aa). Residues 455–485 form a type E(+) motif region; sequence DQVHKFVVDDKMHPESAVIYSELGEVINRAI. Residues 486–581 form a type DYW motif region; the sequence is LAGYKPEDSN…DGICSCNDYW (96 aa).

The protein belongs to the PPR family. PCMP-H subfamily.

The polypeptide is Pentatricopeptide repeat-containing protein At3g56550 (PCMP-H80) (Arabidopsis thaliana (Mouse-ear cress)).